Here is a 371-residue protein sequence, read N- to C-terminus: Envelope glycoprotein M (371 aa).

The Intravirion segment spans residues 1–13 (MAPSHVDKVNTRT). A helical membrane pass occupies residues 14 to 34 (WSASIVFMVLTFVNVSVHLVL). At 35 to 79 (SNFPHLGYPCVYYHVVDFERLNMSAYNVMHLHTPMLFLDSVQLVC) the chain is on the virion surface side. A helical transmembrane segment spans residues 80-100 (YAVFMQLVFLAVTIYYLVCWI). The Intravirion segment spans residues 101-126 (KISMRKDKGMSLNQSTRDISYMGDSL). Residues 127-147 (TAFLFILSMDTFQLFTLTMSF) form a helical membrane-spanning segment. Residues 148 to 151 (RLPS) are Virion surface-facing. Residues 152–172 (MIAFMAAVHFFCLTIFNVSMV) traverse the membrane as a helical segment. Topologically, residues 173 to 200 (TQYRSYKRSLFFFSRLHPKLKGTVQFRT) are intravirion. Residues 201-221 (LIVNLVEVALGFNTTVVAMAL) traverse the membrane as a helical segment. Residues 222–239 (CYGFGNNFFVRTGHMVLA) lie on the Virion surface side of the membrane. Residues 240 to 260 (VFVVYAIISIIYFLLIEAVFF) form a helical membrane-spanning segment. Residues 261 to 264 (QYVK) lie on the Intravirion side of the membrane. Residues 265 to 285 (VQFGYHLGAFFGLCGLIYPIV) form a helical membrane-spanning segment. At 286–298 (QYDTFLSNEYRTG) the chain is on the virion surface side. A helical transmembrane segment spans residues 299–319 (ISWSFGMLFFIWAMFTTCRAV). Over 320–371 (RYFRGRGSGSVKYQALATASGEEVAALSHHDSLESRRLREEEDDDDEDFEDA) the chain is Intravirion. The segment at 346–371 (LSHHDSLESRRLREEEDDDDEDFEDA) is disordered. Over residues 347 to 359 (SHHDSLESRRLRE) the composition is skewed to basic and acidic residues. Residues 360 to 371 (EEDDDDEDFEDA) are compositionally biased toward acidic residues.

The protein belongs to the herpesviridae glycoprotein M family. As to quaternary structure, interacts (via N-terminus) with gN (via N-terminus). The gM-gN heterodimer forms the gCII complex.

It is found in the virion membrane. The protein localises to the host Golgi apparatus. The protein resides in the host trans-Golgi network. Its subcellular location is the host endosome membrane. It localises to the host nucleus inner membrane. Envelope glycoprotein important for virion assembly and egress. Plays a role in the correct incorporation of gH-gL into virion membrane. Directs the glycoprotein N (gN) to the host trans-Golgi network. In Homo sapiens (Human), this protein is Envelope glycoprotein M.